Reading from the N-terminus, the 220-residue chain is Early protein OPG038 (220 aa).

A signal peptide spans 1 to 17 (MVYKLVLLFCIASLGYS).

This sequence belongs to the orthopoxvirus OPG038 family. As to quaternary structure, homooligomer. Interacts with host CD80 and CD86 when secreted. Glycosylated by host.

The protein resides in the host endoplasmic reticulum. It localises to the secreted. Plays a role in immune evasion. When secreted, inhibits T-cell activation by preventing the binding of host CD80 and CD86 to soluble CTLA4 and CD28. In the infected cell, may inhibits host NF kappa B activation. The sequence is that of Early protein OPG038 (OPG038) from Homo sapiens (Human).